The sequence spans 267 residues: Hydroxyethylthiazole kinase 2 (267 aa).

Met-41 serves as a coordination point for substrate. Positions 116 and 166 each coordinate ATP. A substrate-binding site is contributed by Gly-193.

It belongs to the Thz kinase family. Mg(2+) is required as a cofactor.

The enzyme catalyses 5-(2-hydroxyethyl)-4-methylthiazole + ATP = 4-methyl-5-(2-phosphooxyethyl)-thiazole + ADP + H(+). The protein operates within cofactor biosynthesis; thiamine diphosphate biosynthesis; 4-methyl-5-(2-phosphoethyl)-thiazole from 5-(2-hydroxyethyl)-4-methylthiazole: step 1/1. Its function is as follows. Catalyzes the phosphorylation of the hydroxyl group of 4-methyl-5-beta-hydroxyethylthiazole (THZ). This chain is Hydroxyethylthiazole kinase 2, found in Streptococcus pneumoniae serotype 4 (strain ATCC BAA-334 / TIGR4).